The primary structure comprises 330 residues: DNA-directed RNA polymerase subunit alpha (330 aa).

Positions 1-236 are alpha N-terminal domain (alpha-NTD); it reads MQGSVTEFLK…EQLDAFVDLR (236 aa). Residues 250–330 form an alpha C-terminal domain (alpha-CTD) region; that stretch reads FDPILLRPVD…NWPPASIAED (81 aa).

This sequence belongs to the RNA polymerase alpha chain family. In terms of assembly, homodimer. The RNAP catalytic core consists of 2 alpha, 1 beta, 1 beta' and 1 omega subunit. When a sigma factor is associated with the core the holoenzyme is formed, which can initiate transcription.

It carries out the reaction RNA(n) + a ribonucleoside 5'-triphosphate = RNA(n+1) + diphosphate. Its function is as follows. DNA-dependent RNA polymerase catalyzes the transcription of DNA into RNA using the four ribonucleoside triphosphates as substrates. This chain is DNA-directed RNA polymerase subunit alpha, found in Vibrio atlanticus (strain LGP32) (Vibrio splendidus (strain Mel32)).